A 165-amino-acid polypeptide reads, in one-letter code: Crossover junction endodeoxyribonuclease RuvC (165 aa).

Active-site residues include Asp-7, Glu-67, and Asp-140. 3 residues coordinate Mg(2+): Asp-7, Glu-67, and Asp-140.

It belongs to the RuvC family. In terms of assembly, homodimer which binds Holliday junction (HJ) DNA. The HJ becomes 2-fold symmetrical on binding to RuvC with unstacked arms; it has a different conformation from HJ DNA in complex with RuvA. In the full resolvosome a probable DNA-RuvA(4)-RuvB(12)-RuvC(2) complex forms which resolves the HJ. Mg(2+) is required as a cofactor.

It localises to the cytoplasm. It catalyses the reaction Endonucleolytic cleavage at a junction such as a reciprocal single-stranded crossover between two homologous DNA duplexes (Holliday junction).. In terms of biological role, the RuvA-RuvB-RuvC complex processes Holliday junction (HJ) DNA during genetic recombination and DNA repair. Endonuclease that resolves HJ intermediates. Cleaves cruciform DNA by making single-stranded nicks across the HJ at symmetrical positions within the homologous arms, yielding a 5'-phosphate and a 3'-hydroxyl group; requires a central core of homology in the junction. The consensus cleavage sequence is 5'-(A/T)TT(C/G)-3'. Cleavage occurs on the 3'-side of the TT dinucleotide at the point of strand exchange. HJ branch migration catalyzed by RuvA-RuvB allows RuvC to scan DNA until it finds its consensus sequence, where it cleaves and resolves the cruciform DNA. The protein is Crossover junction endodeoxyribonuclease RuvC of Halothermothrix orenii (strain H 168 / OCM 544 / DSM 9562).